The sequence spans 239 residues: SGAVHFSFTKFSTSSSDLTLQGSALVSSKGSLKKNPSKKGKPVDHSVGRALYRSPIHIWDETTGKVASFDATFSFVSEAPAIPMLFPSSKGELNDEDDTRIGGQLGVVNDSYNVIRVTVAVENDGYRNRVDPSARPHISLPIKSVRSKKTAKWNMQTGKVGTAHISYNSVAKRLSAVVSYTGNSSSTTVSYDVLLNLAVLPSKVLVGKTATGLYKDHVETNTILSWSFTSKLKTNSIAD.

Residues Glu-122 and Asp-124 each coordinate Mn(2+). Residues Asp-124, Tyr-126, Asn-128, and Asp-131 each coordinate Ca(2+). Residues Asp-131 and His-137 each contribute to the Mn(2+) site.

This sequence belongs to the leguminous lectin family. Homotetramer. As to expression, seed.

Its subcellular location is the vacuole. The protein localises to the aleurone grain. Functionally, lactose-binding lectin. Also binds derivatives of galactose, glucose, lactose, and mannose. Binds O-glycoproteins such as mucins more strongly than N-glycoproteins. Shows agglutinating activity towards rabbit erythrocytes. The protein is Lactose-binding lectin-2 of Cymbosema roseum (Dioclea purpurea).